Here is a 318-residue protein sequence, read N- to C-terminus: Protoheme IX farnesyltransferase (318 aa).

Helical transmembrane passes span Val-34–Asn-54, Pro-55–Leu-75, Ile-95–Phe-115, Ile-118–Phe-138, Ile-155–Gly-175, Ile-182–Phe-202, Ile-228–Leu-250, Ala-254–Met-273, and Phe-287–Ile-307.

This sequence belongs to the UbiA prenyltransferase family. Protoheme IX farnesyltransferase subfamily.

It is found in the cell inner membrane. It catalyses the reaction heme b + (2E,6E)-farnesyl diphosphate + H2O = Fe(II)-heme o + diphosphate. It functions in the pathway porphyrin-containing compound metabolism; heme O biosynthesis; heme O from protoheme: step 1/1. In terms of biological role, converts heme B (protoheme IX) to heme O by substitution of the vinyl group on carbon 2 of heme B porphyrin ring with a hydroxyethyl farnesyl side group. The chain is Protoheme IX farnesyltransferase from Sinorhizobium fredii (strain NBRC 101917 / NGR234).